Here is a 402-residue protein sequence, read N- to C-terminus: mRNA-capping enzyme subunit alpha (402 aa).

Lys67 (N6-GMP-lysine intermediate) is an active-site residue. Positions Ser374–Ile402 are disordered.

It belongs to the eukaryotic GTase family. Heterodimer. The mRNA-capping enzyme is composed of two separate chains alpha and beta, respectively a mRNA guanylyltransferase and an mRNA 5'-triphosphate monophosphatase.

The protein resides in the nucleus. It carries out the reaction a 5'-end diphospho-ribonucleoside in mRNA + GTP + H(+) = a 5'-end (5'-triphosphoguanosine)-ribonucleoside in mRNA + diphosphate. Second step of mRNA capping. Transfer of the GMP moiety of GTP to the 5'-end of RNA via an enzyme-GMP covalent reaction intermediate. The chain is mRNA-capping enzyme subunit alpha (ceg1) from Schizosaccharomyces pombe (strain 972 / ATCC 24843) (Fission yeast).